The sequence spans 30 residues: Ranatuerin-2OK (30 aa).

Cysteines 23 and 30 form a disulfide.

As to expression, expressed by the skin glands.

Its subcellular location is the secreted. Antimicrobial peptide. Active against Gram-negative bacterium E.coli (MIC=12.5 uM) and against Gram-positive bacterium S.aureus (MIC=50 uM). The protein is Ranatuerin-2OK of Nidirana okinavana (Kampira Falls frog).